The sequence spans 188 residues: Photosystem I assembly protein Ycf4 (188 aa).

The next 2 membrane-spanning stretches (helical) occupy residues 26–48 (FFWA…SSYF) and 63–85 (FIPQ…GYLW).

It belongs to the Ycf4 family.

Its subcellular location is the cellular thylakoid membrane. In terms of biological role, seems to be required for the assembly of the photosystem I complex. This Synechocystis sp. (strain ATCC 27184 / PCC 6803 / Kazusa) protein is Photosystem I assembly protein Ycf4.